We begin with the raw amino-acid sequence, 74 residues long: Small ribosomal subunit protein bS18 (74 aa).

It belongs to the bacterial ribosomal protein bS18 family. Part of the 30S ribosomal subunit. Forms a tight heterodimer with protein bS6.

Binds as a heterodimer with protein bS6 to the central domain of the 16S rRNA, where it helps stabilize the platform of the 30S subunit. The sequence is that of Small ribosomal subunit protein bS18 from Gloeobacter violaceus (strain ATCC 29082 / PCC 7421).